A 378-amino-acid chain; its full sequence is Queuine tRNA-ribosyltransferase (378 aa).

The active-site Proton acceptor is the Asp-89. Substrate is bound by residues 89-93 (DSGGF), Asp-143, Gln-187, and Gly-214. The interval 245-251 (GVGKPED) is RNA binding. Asp-264 acts as the Nucleophile in catalysis. Residues 269-273 (TRNAR) form an RNA binding; important for wobble base 34 recognition region. The Zn(2+) site is built by Cys-302, Cys-304, Cys-307, and His-333.

It belongs to the queuine tRNA-ribosyltransferase family. As to quaternary structure, homodimer. Within each dimer, one monomer is responsible for RNA recognition and catalysis, while the other monomer binds to the replacement base PreQ1. Zn(2+) serves as cofactor.

The enzyme catalyses 7-aminomethyl-7-carbaguanine + guanosine(34) in tRNA = 7-aminomethyl-7-carbaguanosine(34) in tRNA + guanine. Its pathway is tRNA modification; tRNA-queuosine biosynthesis. Its function is as follows. Catalyzes the base-exchange of a guanine (G) residue with the queuine precursor 7-aminomethyl-7-deazaguanine (PreQ1) at position 34 (anticodon wobble position) in tRNAs with GU(N) anticodons (tRNA-Asp, -Asn, -His and -Tyr). Catalysis occurs through a double-displacement mechanism. The nucleophile active site attacks the C1' of nucleotide 34 to detach the guanine base from the RNA, forming a covalent enzyme-RNA intermediate. The proton acceptor active site deprotonates the incoming PreQ1, allowing a nucleophilic attack on the C1' of the ribose to form the product. After dissociation, two additional enzymatic reactions on the tRNA convert PreQ1 to queuine (Q), resulting in the hypermodified nucleoside queuosine (7-(((4,5-cis-dihydroxy-2-cyclopenten-1-yl)amino)methyl)-7-deazaguanosine). In Yersinia enterocolitica serotype O:8 / biotype 1B (strain NCTC 13174 / 8081), this protein is Queuine tRNA-ribosyltransferase.